Consider the following 408-residue polypeptide: Probable 2,3-bisphosphoglycerate-independent phosphoglycerate mutase (408 aa).

The protein belongs to the BPG-independent phosphoglycerate mutase family. A-PGAM subfamily.

It carries out the reaction (2R)-2-phosphoglycerate = (2R)-3-phosphoglycerate. Its pathway is carbohydrate degradation; glycolysis; pyruvate from D-glyceraldehyde 3-phosphate: step 3/5. Its function is as follows. Catalyzes the interconversion of 2-phosphoglycerate and 3-phosphoglycerate. This is Probable 2,3-bisphosphoglycerate-independent phosphoglycerate mutase from Deinococcus geothermalis (strain DSM 11300 / CIP 105573 / AG-3a).